The chain runs to 1642 residues: DNA-directed RNA polymerase I subunit RPA1 (1642 aa).

Zn(2+)-binding residues include C66, C69, C75, and H78. The Mg(2+) site is built by D565, D567, and D569. The tract at residues 939–951 (PQDFFFHCMAGRE) is bridging helix. The tract at residues 1337–1428 (DADKDDDNDL…GNDNDGDDKA (92 aa)) is disordered. The span at 1340 to 1350 (KDDDNDLDNGD) shows a compositional bias: acidic residues. Residues 1351–1361 (EVGRSKAKAND) show a composition bias toward basic and acidic residues. Acidic residues-rich tracts occupy residues 1362-1373 (DDSSDDNDDDDA) and 1386-1424 (KDYD…DNDG). Phosphoserine occurs at positions 1364 and 1365.

It belongs to the RNA polymerase beta' chain family. In terms of assembly, component of the RNA polymerase I (Pol I) complex consisting of at least 13 subunits. In terms of processing, phosphorylated.

The protein resides in the nucleus. It is found in the nucleolus. The enzyme catalyses RNA(n) + a ribonucleoside 5'-triphosphate = RNA(n+1) + diphosphate. Its function is as follows. DNA-dependent RNA polymerase catalyzes the transcription of DNA into RNA using the four ribonucleoside triphosphates as substrates. Largest and catalytic core component of RNA polymerase I which synthesizes ribosomal RNA precursors. Forms the polymerase active center together with the second largest subunit. A single stranded DNA template strand of the promoter is positioned within the central active site cleft of Pol I. A bridging helix emanates from RPA1 and crosses the cleft near the catalytic site and is thought to promote translocation of Pol I by acting as a ratchet that moves the RNA-DNA hybrid through the active site by switching from straight to bent conformations at each step of nucleotide addition. The chain is DNA-directed RNA polymerase I subunit RPA1 (RpI1) from Drosophila melanogaster (Fruit fly).